The following is a 101-amino-acid chain: Small ribosomal subunit protein uS14 (101 aa).

This sequence belongs to the universal ribosomal protein uS14 family. In terms of assembly, part of the 30S ribosomal subunit. Contacts proteins S3 and S10.

Binds 16S rRNA, required for the assembly of 30S particles and may also be responsible for determining the conformation of the 16S rRNA at the A site. The protein is Small ribosomal subunit protein uS14 of Chlamydia pneumoniae (Chlamydophila pneumoniae).